A 461-amino-acid chain; its full sequence is tRNA modification GTPase MnmE (461 aa).

(6S)-5-formyl-5,6,7,8-tetrahydrofolate is bound by residues R27, E89, and R128. The TrmE-type G domain occupies 224–382 (GLATAIVGQP…LEELINKLFF (159 aa)). N234 provides a ligand contact to K(+). Residues 234-239 (NVGKSS), 253-259 (TDVAGTT), and 278-281 (DTAG) each bind GTP. S238 provides a ligand contact to Mg(2+). K(+) contacts are provided by T253, V255, and T258. Mg(2+) is bound at residue T259. (6S)-5-formyl-5,6,7,8-tetrahydrofolate is bound at residue K461.

Belongs to the TRAFAC class TrmE-Era-EngA-EngB-Septin-like GTPase superfamily. TrmE GTPase family. Homodimer. Heterotetramer of two MnmE and two MnmG subunits. K(+) serves as cofactor.

It is found in the cytoplasm. Exhibits a very high intrinsic GTPase hydrolysis rate. Involved in the addition of a carboxymethylaminomethyl (cmnm) group at the wobble position (U34) of certain tRNAs, forming tRNA-cmnm(5)s(2)U34. The polypeptide is tRNA modification GTPase MnmE (Lactobacillus acidophilus (strain ATCC 700396 / NCK56 / N2 / NCFM)).